A 382-amino-acid polypeptide reads, in one-letter code: Histidinol-phosphate aminotransferase (382 aa).

Lys-215 bears the N6-(pyridoxal phosphate)lysine mark. The disordered stretch occupies residues 360–382 (NSNNIDNQSKTHSQTSSIRKGTI).

This sequence belongs to the class-II pyridoxal-phosphate-dependent aminotransferase family. Histidinol-phosphate aminotransferase subfamily. Homodimer. Requires pyridoxal 5'-phosphate as cofactor.

It carries out the reaction L-histidinol phosphate + 2-oxoglutarate = 3-(imidazol-4-yl)-2-oxopropyl phosphate + L-glutamate. It participates in amino-acid biosynthesis; L-histidine biosynthesis; L-histidine from 5-phospho-alpha-D-ribose 1-diphosphate: step 7/9. The protein is Histidinol-phosphate aminotransferase of Yersinia pseudotuberculosis serotype IB (strain PB1/+).